We begin with the raw amino-acid sequence, 226 residues long: Phospholipase Culp4 (226 aa).

Residues 1–45 (MIPRPQPHSGRWRAGAARRLTSLVAAAFAAATLLLTPALAPPASA) form the signal peptide. C47 and C117 are oxidised to a cystine. The active-site Nucleophile is the S128. Cysteines 191 and 198 form a disulfide. The active site involves D195. The Proton donor/acceptor role is filled by H207.

It belongs to the cutinase family. In terms of assembly, homodimer.

The protein resides in the cell membrane. It localises to the secreted. It is found in the cell wall. The catalysed reaction is 1,2-dihexadecanoyl-sn-glycero-3-phosphocholine + H2O = 1-hexadecanoyl-sn-glycero-3-phosphocholine + hexadecanoate + H(+). It catalyses the reaction a butanoate ester + H2O = an aliphatic alcohol + butanoate + H(+). Its activity is regulated as follows. Inhibited by high concentrations of paraoxon. Inhibited by tetrahydrolipstatin (THL), a specific lipase inhibitor. In terms of biological role, A2-type phospholipase, which is probably involved in the degradation of macrophage membrane. Hydrolyzes dipalmitoylphosphatidylcholine. Also shows moderate esterase activity and hydrolyzes the p-nitrophenol-linked aliphatic ester pNP-butyrate (C4). Does not exhibit cutinase activity. This chain is Phospholipase Culp4, found in Mycobacterium tuberculosis (strain ATCC 25618 / H37Rv).